A 417-amino-acid polypeptide reads, in one-letter code: NADH-quinone oxidoreductase subunit D (417 aa).

It belongs to the complex I 49 kDa subunit family. As to quaternary structure, NDH-1 is composed of 14 different subunits. Subunits NuoB, C, D, E, F, and G constitute the peripheral sector of the complex.

It is found in the cell inner membrane. It catalyses the reaction a quinone + NADH + 5 H(+)(in) = a quinol + NAD(+) + 4 H(+)(out). Functionally, NDH-1 shuttles electrons from NADH, via FMN and iron-sulfur (Fe-S) centers, to quinones in the respiratory chain. The immediate electron acceptor for the enzyme in this species is believed to be ubiquinone. Couples the redox reaction to proton translocation (for every two electrons transferred, four hydrogen ions are translocated across the cytoplasmic membrane), and thus conserves the redox energy in a proton gradient. This chain is NADH-quinone oxidoreductase subunit D, found in Methylibium petroleiphilum (strain ATCC BAA-1232 / LMG 22953 / PM1).